The chain runs to 969 residues: RNA polymerase-associated protein RapA (969 aa).

The Helicase ATP-binding domain occupies 164 to 334 (EVGRRYAPRV…FARLRLLDPD (171 aa)). 177–184 (DEVGLGKT) is an ATP binding site. The DEAH box signature appears at 280 to 283 (DEAH). The Helicase C-terminal domain occupies 492 to 672 (RVNWLLELLK…GLEPLIEESA (181 aa)).

This sequence belongs to the SNF2/RAD54 helicase family. RapA subfamily. Interacts with the RNAP. Has a higher affinity for the core RNAP than for the holoenzyme. Its ATPase activity is stimulated by binding to RNAP.

Transcription regulator that activates transcription by stimulating RNA polymerase (RNAP) recycling in case of stress conditions such as supercoiled DNA or high salt concentrations. Probably acts by releasing the RNAP, when it is trapped or immobilized on tightly supercoiled DNA. Does not activate transcription on linear DNA. Probably not involved in DNA repair. The polypeptide is RNA polymerase-associated protein RapA (Aliivibrio salmonicida (strain LFI1238) (Vibrio salmonicida (strain LFI1238))).